The primary structure comprises 501 residues: Ectoine/hydroxyectoine transporter (501 aa).

12 helical membrane-spanning segments follow: residues proline 9 to proline 29, isoleucine 45 to leucine 65, phenylalanine 86 to glycine 106, alanine 137 to alanine 157, leucine 190 to methionine 210, valine 220 to isoleucine 240, leucine 258 to leucine 278, tryptophan 311 to alanine 331, valine 343 to glycine 363, leucine 395 to threonine 415, isoleucine 441 to glutamate 461, and threonine 465 to phenylalanine 485.

It belongs to the BCCT transporter (TC 2.A.15) family.

Its subcellular location is the cell inner membrane. Mediates the import of ectoine and hydroxyectoine, which function as osmotic and cold stress protectants. Also has minor uptake activities for the compatible solutes proline and glycine betaine. The protein is Ectoine/hydroxyectoine transporter of Virgibacillus pantothenticus.